A 2878-amino-acid chain; its full sequence is Trinucleotide repeat-containing gene 18 protein (2878 aa).

Disordered regions lie at residues 1–54 and 102–194; these read MDGR…KYMA and TQKD…SSRL. Polar residues predominate over residues 119–128; the sequence is TPSSRTPSGH. 3 stretches are compositionally biased toward basic and acidic residues: residues 137-149, 158-169, and 179-194; these read SSRE…RAGR, GKKDPRAREEVS, and QEAR…SSRL. Position 199 is a phosphoserine (S199). 12 disordered regions span residues 259 to 289, 313 to 442, 487 to 507, 540 to 655, 865 to 1002, 1033 to 1104, 1127 to 1146, 1171 to 1228, 1429 to 1535, 1613 to 1668, 1694 to 1718, and 1737 to 1787; these read ARPC…AGVY, FDER…KWKP, MPRA…AAHG, SPFG…DDEC, AQEH…ALFT, ADGL…LESP, LEAQ…SEVS, LGTQ…DCDL, ELVK…DSSS, LGLS…DEDE, VPKN…RTLK, and EARS…GEQA. Positions 264 to 283 are enriched in pro residues; it reads SPLPPPPPLPPKGPPAPPSS. Basic and acidic residues-rich tracts occupy residues 327–337 and 350–362; these read RDVRAREREPG and RLER…EKSS. Over residues 376 to 390 the composition is skewed to low complexity; that stretch reads PPAARSSRSSPDARA. Over residues 396–411 the composition is skewed to basic and acidic residues; it reads ELLKPEADPRPCERAP. Phosphoserine is present on S540. A Glycyl lysine isopeptide (Lys-Gly) (interchain with G-Cter in SUMO2) cross-link involves residue K549. 2 stretches are compositionally biased toward basic and acidic residues: residues 580–589 and 865–881; these read LKRDPERPES and AQEH…KRSL. Positions 958-969 are enriched in pro residues; the sequence is SSPPPASPPPTP. Basic and acidic residues predominate over residues 972–993; that stretch reads TRKEEAPENVVEKKDLELEKET. Residues S1053 and S1062 each carry the phosphoserine modification. Positions 1068–1088 are enriched in basic and acidic residues; it reads EPPRDSPEEEQLADREVKAEV. The stretch at 1410 to 1442 forms a coiled coil; that stretch reads LDFRMRLAEVQRRYKEKQRELVKLQRRRDSGDR. Over residues 1429 to 1448 the composition is skewed to basic and acidic residues; that stretch reads ELVKLQRRRDSGDRHEDAHR. Residues 1449–1463 show a composition bias toward basic residues; sequence SLARRGPGRPRKRTH. The residue at position 1469 (S1469) is a Phosphoserine. The span at 1478-1492 shows a compositional bias: low complexity; that stretch reads SSSGKGLSSKSLLTS. The segment covering 1745–1775 has biased composition (acidic residues); that stretch reads SSEEDSFDQDDSSEEEEEELEEEEEDEEEEG. A phosphoserine mark is found at S1789 and S1795. Over residues 1825-1835 the composition is skewed to basic and acidic residues; sequence EQKARKKEERQ. Disordered stretches follow at residues 1825–2040, 2052–2080, and 2226–2681; these read EQKA…GAVS, FEAN…TPAP, and LLVP…RLPS. Positions 1876–1890 are enriched in low complexity; it reads AAPGPGSRASGPSSP. 4 stretches are compositionally biased toward basic and acidic residues: residues 1891–1900, 1925–1936, 1966–1978, and 2024–2034; these read DKAKLVSEKG, LWTRRRSERIFL, PRKD…DRKD, and RGKEAKKENRG. T2077 carries the post-translational modification Phosphothreonine. Over residues 2238–2247 the composition is skewed to basic and acidic residues; that stretch reads TSKDTGEVKE. Over residues 2261–2270 the composition is skewed to basic residues; it reads ARGRGRKPST. Basic and acidic residues-rich tracts occupy residues 2307 to 2316 and 2409 to 2419; these read STPEPVDKRA and AKEALLLREDP. Composition is skewed to low complexity over residues 2460–2470, 2491–2520, and 2540–2578; these read EPGPGLPLEDP, TTSS…SGSE, and RTCS…SSST. Acidic residues predominate over residues 2579-2591; it reads TDEDSSCSSDEEA. A compositionally biased stretch (pro residues) spans 2631–2641; that stretch reads TQPPPQPPPQP. S2681 is modified (phosphoserine). The BAH domain maps to 2727–2872; it reads EMIRIGDCAV…PTTGMIFSTD (146 aa).

The polypeptide is Trinucleotide repeat-containing gene 18 protein (Tnrc18) (Mus musculus (Mouse)).